Reading from the N-terminus, the 309-residue chain is Probable pyridoxal 5'-phosphate synthase subunit PDX1 (309 aa).

D40 provides a ligand contact to D-ribose 5-phosphate. K97 functions as the Schiff-base intermediate with D-ribose 5-phosphate in the catalytic mechanism. G169 contributes to the D-ribose 5-phosphate binding site. Residue R181 coordinates D-glyceraldehyde 3-phosphate. D-ribose 5-phosphate is bound by residues G230 and 251 to 252 (GS).

This sequence belongs to the PdxS/SNZ family.

It catalyses the reaction aldehydo-D-ribose 5-phosphate + D-glyceraldehyde 3-phosphate + L-glutamine = pyridoxal 5'-phosphate + L-glutamate + phosphate + 3 H2O + H(+). It participates in cofactor biosynthesis; pyridoxal 5'-phosphate biosynthesis. In terms of biological role, catalyzes the formation of pyridoxal 5'-phosphate from ribose 5-phosphate (RBP), glyceraldehyde 3-phosphate (G3P) and ammonia. The ammonia is provided by PDX2. Can also use ribulose 5-phosphate and dihydroxyacetone phosphate as substrates, resulting from enzyme-catalyzed isomerization of RBP and G3P, respectively. Also plays an indirect role in resistance to singlet oxygen-generating photosensitizers. This is Probable pyridoxal 5'-phosphate synthase subunit PDX1 (PDX1) from Ginkgo biloba (Ginkgo).